A 927-amino-acid chain; its full sequence is Protein translocase subunit SecA (927 aa).

ATP is bound by residues glutamine 86, 104–108 (GEGKT), and aspartate 494. The tract at residues 853–927 (YTAPDEDGTP…GSKAKRGKRR (75 aa)) is disordered. Positions 860-879 (GTPHAEVEAVDPGARERTSE) are enriched in basic and acidic residues. Basic residues predominate over residues 907 to 927 (RAKRRGASARSGSKAKRGKRR).

The protein belongs to the SecA family. In terms of assembly, monomer and homodimer. Part of the essential Sec protein translocation apparatus which comprises SecA, SecYEG and auxiliary proteins SecDF. Other proteins may also be involved.

It localises to the cell membrane. The protein localises to the cytoplasm. The catalysed reaction is ATP + H2O + cellular proteinSide 1 = ADP + phosphate + cellular proteinSide 2.. In terms of biological role, part of the Sec protein translocase complex. Interacts with the SecYEG preprotein conducting channel. Has a central role in coupling the hydrolysis of ATP to the transfer of proteins into and across the cell membrane, serving as an ATP-driven molecular motor driving the stepwise translocation of polypeptide chains across the membrane. This is Protein translocase subunit SecA from Kocuria rhizophila (strain ATCC 9341 / DSM 348 / NBRC 103217 / DC2201).